A 202-amino-acid chain; its full sequence is dTTP/UTP pyrophosphatase (202 aa).

Residue aspartate 74 is the Proton acceptor of the active site.

This sequence belongs to the Maf family. YhdE subfamily. Requires a divalent metal cation as cofactor.

The protein localises to the cytoplasm. It carries out the reaction dTTP + H2O = dTMP + diphosphate + H(+). The catalysed reaction is UTP + H2O = UMP + diphosphate + H(+). In terms of biological role, nucleoside triphosphate pyrophosphatase that hydrolyzes dTTP and UTP. May have a dual role in cell division arrest and in preventing the incorporation of modified nucleotides into cellular nucleic acids. This Methylococcus capsulatus (strain ATCC 33009 / NCIMB 11132 / Bath) protein is dTTP/UTP pyrophosphatase.